We begin with the raw amino-acid sequence, 324 residues long: Tyrosine--tRNA ligase (324 aa).

An L-tyrosine-binding site is contributed by Tyr-36. Residues 41–49 (PSGKVHLGH) carry the 'HIGH' region motif. Positions 158, 162, 165, and 180 each coordinate L-tyrosine. Residues 215-219 (KMSSS) carry the 'KMSKS' region motif. Ser-218 contacts ATP.

This sequence belongs to the class-I aminoacyl-tRNA synthetase family. TyrS type 3 subfamily. Homodimer.

It localises to the cytoplasm. It carries out the reaction tRNA(Tyr) + L-tyrosine + ATP = L-tyrosyl-tRNA(Tyr) + AMP + diphosphate + H(+). Functionally, catalyzes the attachment of tyrosine to tRNA(Tyr) in a two-step reaction: tyrosine is first activated by ATP to form Tyr-AMP and then transferred to the acceptor end of tRNA(Tyr). This is Tyrosine--tRNA ligase from Methanopyrus kandleri (strain AV19 / DSM 6324 / JCM 9639 / NBRC 100938).